Here is a 292-residue protein sequence, read N- to C-terminus: NAD(P)H-hydrate epimerase (292 aa).

The transit peptide at 1-52 (MYGLRTLFSLGLLVGGARLGARVAQVGALGGTCPLGQGLVADGNSQCKQFRT) directs the protein to the mitochondrion. The YjeF N-terminal domain maps to 68–279 (AQAVDEELFN…ALEKKYSLNL (212 aa)). Residue 122–126 (NNGGD) participates in (6S)-NADPHX binding. Residues Asn-123 and Asp-189 each coordinate K(+). (6S)-NADPHX contacts are provided by residues 193–199 (GFSFKGA) and Asp-222. K(+) is bound at residue Ser-225.

Belongs to the NnrE/AIBP family. K(+) is required as a cofactor.

It localises to the mitochondrion. It is found in the secreted. It carries out the reaction (6R)-NADHX = (6S)-NADHX. It catalyses the reaction (6R)-NADPHX = (6S)-NADPHX. In terms of biological role, catalyzes the epimerization of the S- and R-forms of NAD(P)HX, a damaged form of NAD(P)H that is a result of enzymatic or heat-dependent hydration. This is a prerequisite for the S-specific NAD(P)H-hydrate dehydratase to allow the repair of both epimers of NAD(P)HX. This Xenopus tropicalis (Western clawed frog) protein is NAD(P)H-hydrate epimerase.